The sequence spans 427 residues: Trigger factor (427 aa).

The 86-residue stretch at 163–248 (GDTVILDFEG…LHEIKTKEVP (86 aa)) folds into the PPIase FKBP-type domain.

The protein belongs to the FKBP-type PPIase family. Tig subfamily.

It localises to the cytoplasm. It catalyses the reaction [protein]-peptidylproline (omega=180) = [protein]-peptidylproline (omega=0). In terms of biological role, involved in protein export. Acts as a chaperone by maintaining the newly synthesized protein in an open conformation. Functions as a peptidyl-prolyl cis-trans isomerase. The chain is Trigger factor from Listeria monocytogenes serotype 4a (strain HCC23).